The sequence spans 183 residues: PARTHHDITTRDQYPLISRDRDQYGMIGRDQYNMSGQNYSKSRQIAKATTAVTAGDSLLVLSSLTLVGTVIALIVATPLLVIFSPILVPALITVALLITGFLSSGAFGIAAITVFSWIYKYATGEHPQGSDKLDSARMKLGSKAQDMKDRAYYYGQQHTGEEHDRDRDHRTDRDRTRGTQHTT.

The segment at 1–47 (PARTHHDITTRDQYPLISRDRDQYGMIGRDQYNMSGQNYSKSRQIAK) is polar. 2 consecutive repeats follow at residues 11 to 20 (RDQYPLISRD) and 21 to 30 (RDQYGMIGRD). Residues 48 to 119 (ATTAVTAGDS…AAITVFSWIY (72 aa)) form a hydrophobic region. Transmembrane regions (helical) follow at residues 57–77 (SLLV…IVAT) and 99–119 (TGFL…SWIY). Positions 154 to 183 (YGQQHTGEEHDRDRDHRTDRDRTRGTQHTT) are disordered. Over residues 159–177 (TGEEHDRDRDHRTDRDRTR) the composition is skewed to basic and acidic residues.

Belongs to the oleosin family.

The protein resides in the lipid droplet. It localises to the membrane. Its function is as follows. May have a structural role to stabilize the lipid body during desiccation of the seed by preventing coalescence of the oil. Probably interacts with both lipid and phospholipid moieties of lipid bodies. May also provide recognition signals for specific lipase anchorage in lipolysis during seedling growth. The polypeptide is Oleosin Bn-V (Brassica napus (Rape)).